The primary structure comprises 167 residues: NADH-ubiquinone oxidoreductase chain 4 (167 aa).

3 helical membrane-spanning segments follow: residues 2–22, 44–64, and 86–106; these read FIGATTLMIAHGLTSSLLFCL, LLPLAATWWLLASLTNLALPP, and IILVGLNTLITALYSLYMLIM.

This sequence belongs to the complex I subunit 4 family.

The protein localises to the mitochondrion membrane. The enzyme catalyses a ubiquinone + NADH + 5 H(+)(in) = a ubiquinol + NAD(+) + 4 H(+)(out). Core subunit of the mitochondrial membrane respiratory chain NADH dehydrogenase (Complex I) that is believed to belong to the minimal assembly required for catalysis. Complex I functions in the transfer of electrons from NADH to the respiratory chain. The immediate electron acceptor for the enzyme is believed to be ubiquinone. In Carlito syrichta (Philippine tarsier), this protein is NADH-ubiquinone oxidoreductase chain 4 (MT-ND4).